The following is a 493-amino-acid chain: Aerolysin (493 aa).

A signal peptide spans methionine 1–alanine 23. 2 cysteine pairs are disulfide-bonded: cysteine 42-cysteine 98 and cysteine 182-cysteine 187. The interaction with host N-linked glycan stretch occupies residues tryptophan 68–tyrosine 84. Positions tyrosine 256 to tryptophan 288 are part of the transmembrane beta-barrel after proteolytic activation of the toxin and insertion into the host membrane. Residues arginine 346 to histidine 355 are interaction with glycans from host GPI-anchor. Positions alanine 446–glutamine 493 are excised as a propeptide.

Belongs to the aerolysin family. Homodimer in solution; homoheptamer in the host membrane. After binding to GPI-anchored proteins in target membranes and proteolytic removal of the C-terminal propeptide, the protein assembles into a heptameric pre-pore complex. A further conformation change leads to insertion into the host membrane. In terms of processing, proteolytic cleavage and subsequent release of the propeptide trigger a major conformation change, leading to the formation of a heptameric pre-pore that then inserts into the host membrane.

The protein resides in the secreted. The protein localises to the host cell membrane. Secreted, cytolytic toxin that forms pores in host membranes after proteolytic removal of a C-terminal propeptide, leading to destruction of the membrane permeability barrier and host cell death. The pores are formed by transmembrane beta-strands and are approximately 3 nm in diameter. The polypeptide is Aerolysin (aerA) (Aeromonas hydrophila).